A 62-amino-acid polypeptide reads, in one-letter code: Protein sigN176 (62 aa).

This Dictyostelium discoideum (Social amoeba) protein is Protein sigN176.